The sequence spans 775 residues: Glutamine--tRNA ligase (775 aa).

Alanine 2 is modified (N-acetylalanine). Serine 70 is modified (phosphoserine). ATP-binding positions include 271 to 273 (EPN) and 277 to 283 (HIGHAKA). Aspartate 303 contributes to the L-glutamine binding site. An N6-acetyllysine modification is found at lysine 309. Tyrosine 438 lines the L-glutamine pocket. Residues threonine 457, 486–487 (RL), and 494–496 (VSK) each bind ATP. A Phosphoserine modification is found at serine 495.

The protein belongs to the class-I aminoacyl-tRNA synthetase family. As to quaternary structure, monomer. Part of a multisubunit complex that groups tRNA ligases for Arg (RARS1), Asp (DARS1), Gln (QARS1), Ile (IARS1), Leu (LARS1), Lys (KARS1), Met (MARS1) the bifunctional ligase for Glu and Pro (EPRS1) and the auxiliary subunits AIMP1/p43, AIMP2/p38 and EEF1E1/p18. Interacts with RARS1. Part of a complex composed of RARS1, QARS1 and AIMP1. As to expression, detected in dorsal root ganglia (at protein level). Detected in dorsal root ganglia.

The protein resides in the cytoplasm. It is found in the cytosol. It catalyses the reaction tRNA(Gln) + L-glutamine + ATP = L-glutaminyl-tRNA(Gln) + AMP + diphosphate. Glutamine--tRNA ligase. Plays a critical role in brain development. The sequence is that of Glutamine--tRNA ligase (Qars1) from Rattus norvegicus (Rat).